The following is a 385-amino-acid chain: Branched-chain-amino-acid aminotransferase, cytosolic (385 aa).

Lysine 221 carries the post-translational modification N6-(pyridoxal phosphate)lysine.

Belongs to the class-IV pyridoxal-phosphate-dependent aminotransferase family. In terms of assembly, homodimer. Requires pyridoxal 5'-phosphate as cofactor. In terms of tissue distribution, expressed in muscles.

It is found in the cytoplasm. It catalyses the reaction L-leucine + 2-oxoglutarate = 4-methyl-2-oxopentanoate + L-glutamate. The enzyme catalyses L-isoleucine + 2-oxoglutarate = (S)-3-methyl-2-oxopentanoate + L-glutamate. The catalysed reaction is L-valine + 2-oxoglutarate = 3-methyl-2-oxobutanoate + L-glutamate. Functionally, catalyzes the first reaction in the catabolism of the essential branched chain amino acids leucine, isoleucine, and valine. The polypeptide is Branched-chain-amino-acid aminotransferase, cytosolic (BCAT1) (Ovis aries (Sheep)).